Reading from the N-terminus, the 252-residue chain is 5'-nucleotidase SurE (252 aa).

Positions 8, 9, 39, and 95 each coordinate a divalent metal cation.

The protein belongs to the SurE nucleotidase family. A divalent metal cation serves as cofactor.

It is found in the cytoplasm. The enzyme catalyses a ribonucleoside 5'-phosphate + H2O = a ribonucleoside + phosphate. In terms of biological role, nucleotidase that shows phosphatase activity on nucleoside 5'-monophosphates. The protein is 5'-nucleotidase SurE of Clostridium botulinum (strain Kyoto / Type A2).